We begin with the raw amino-acid sequence, 184 residues long: Cobalamin adenosyltransferase (184 aa).

The tract at residues 1–21 (MGNRLSKIATRTGDAGTTGLG) is disordered. ATP contacts are provided by residues 10 to 13 (TRTG), 18 to 19 (TG), Lys28, 130 to 134 (RRAER), and Asn154.

This sequence belongs to the Cob(I)alamin adenosyltransferase family. As to quaternary structure, homotrimer.

The catalysed reaction is 2 cob(II)alamin + AH2 + 2 ATP = 2 adenosylcob(III)alamin + 2 triphosphate + A + 2 H(+). Is potentially allosterically regulated by GTP/GDP, which enhances its affinity for AdoCbl by 5-fold. Binds cob(II)alamin weakly in the absence of ATP. The presence of ATP (but not GTP or GDP) increases the affinity of cob(II)alamin for the enzyme, and stoichiometric binding is observed. GTP blocks the transfer of cob(II)alamin to IcmF from ATR, thus averting its reconstitution with inactive cofactor. Functionally, adenosyltransferase that catalyzes the conversion of cob(II)alamin to adenosylcob(III)alamin (AdoCbl) in the presence of ATP and an electron donor. Acts as an accessory protein of IcmF that functions in cofactor repair, since IcmF is prone to inactivation during catalytic turnover due to the occasional loss of the 5'-deoxyadenosine moiety and formation of the inactive cob(II)alamin cofactor in its active site. Thus, receives and repairs the inactive cofactor, which is then reloaded onto IcmF in a GTPase-gated step. The chain is Cobalamin adenosyltransferase from Cupriavidus metallidurans (strain ATCC 43123 / DSM 2839 / NBRC 102507 / CH34) (Ralstonia metallidurans).